The sequence spans 217 residues: UPF0502 protein KPN78578_10500 (217 aa).

Belongs to the UPF0502 family.

The sequence is that of UPF0502 protein KPN78578_10500 from Klebsiella pneumoniae subsp. pneumoniae (strain ATCC 700721 / MGH 78578).